The primary structure comprises 488 residues: Proline--tRNA ligase (488 aa).

It belongs to the class-II aminoacyl-tRNA synthetase family. ProS type 3 subfamily. Homodimer.

It is found in the cytoplasm. The enzyme catalyses tRNA(Pro) + L-proline + ATP = L-prolyl-tRNA(Pro) + AMP + diphosphate. Catalyzes the attachment of proline to tRNA(Pro) in a two-step reaction: proline is first activated by ATP to form Pro-AMP and then transferred to the acceptor end of tRNA(Pro). Can inadvertently accommodate and process cysteine. The polypeptide is Proline--tRNA ligase (proS) (Borreliella burgdorferi (strain ATCC 35210 / DSM 4680 / CIP 102532 / B31) (Borrelia burgdorferi)).